The sequence spans 307 residues: MSETTYTTTEDTDDTNSTDSMVGTTTGETDEYVREEWREYSFDVPTKLGVDDLDVYYGDDQALEGVSMEIPEKSVTALIGPSGCGKSTFLRCLNRMNDRVSSARIDGSVTLDSQEIYQDGVNLVELRKRVGMVFQSPNPFPKSIRENIAYGPEKHGDIDTGVLARLLGRSDEEQREELVERCLRDAALWDEVHDRLDDNALGLSGGQQQRLCIARCLSVDPEVILMDEPASALDPIATAKIEDLIAELSKEYTVVIVTHNMQQAARISEQTAVFLTGGELVEYGDTDQVFENPQSERVEDYITGKFG.

Positions 1–30 are disordered; it reads MSETTYTTTEDTDDTNSTDSMVGTTTGETD. An ABC transporter domain is found at 48-302; that stretch reads LGVDDLDVYY…PQSERVEDYI (255 aa). An ATP-binding site is contributed by 80-87; sequence GPSGCGKS.

The protein belongs to the ABC transporter superfamily. Phosphate importer (TC 3.A.1.7) family. The complex is composed of two ATP-binding proteins (PstB), two transmembrane proteins (PstC and PstA) and a solute-binding protein (PstS).

It localises to the cell membrane. It carries out the reaction phosphate(out) + ATP + H2O = ADP + 2 phosphate(in) + H(+). In terms of biological role, part of the ABC transporter complex PstSACB involved in phosphate import. Responsible for energy coupling to the transport system. The polypeptide is Phosphate import ATP-binding protein PstB (Haloquadratum walsbyi (strain DSM 16790 / HBSQ001)).